The primary structure comprises 188 residues: RxLR effector protein Avh241 (188 aa).

The N-terminal stretch at 1-16 (MRQYCLLLIVLALAAA) is a signal peptide. The RxLR-dEER signature appears at 43–58 (RLLRSEPQDEDTFEDR). A Host plasma membrane localization motif motif is present at residues 73 to 78 (GAAKAK).

It belongs to the RxLR effector family.

It is found in the secreted. The protein localises to the host cell membrane. Its function is as follows. Effector that triggers cell death in a variety of plant species (including tobacco, tomato and soybean), regardless of the Rps genes present. Avh241 interacts with the plant immune system via at least two different mechanisms, one recognized by plants dependent on subcellular localization and one promoting infection independent on membrane localization. The cell death triggered by Avh241 in N.benthamiana requires the two host mitogen-activated protein kinases, MEK2 and WIPK. This is RxLR effector protein Avh241 from Phytophthora sojae (strain P6497) (Soybean stem and root rot agent).